The sequence spans 353 residues: 4-hydroxy-2-oxovalerate aldolase 1 (353 aa).

A Pyruvate carboxyltransferase domain is found at 14 to 266 (VRMTDTSLRD…KTGIDFFDIA (253 aa)). 22–23 (RD) lines the substrate pocket. Asp23 provides a ligand contact to Mn(2+). The Proton acceptor role is filled by His26. Substrate is bound by residues Ser176 and His205. Mn(2+) is bound by residues His205 and His207. A substrate-binding site is contributed by Tyr296.

This sequence belongs to the 4-hydroxy-2-oxovalerate aldolase family.

The catalysed reaction is (S)-4-hydroxy-2-oxopentanoate = acetaldehyde + pyruvate. In Mycobacterium sp. (strain KMS), this protein is 4-hydroxy-2-oxovalerate aldolase 1.